Reading from the N-terminus, the 268-residue chain is E3 ubiquitin-protein ligase IAP-3 (268 aa).

BIR repeat units follow at residues 18 to 84 (KAAR…CPFV) and 111 to 178 (EAAR…CEYV). Zn(2+)-binding residues include C148, C151, H168, and C175. Residues 221-256 (CKICLGAEKTVCFVPCGHVVACGKCAAGVTTCPVCR) form an RING-type zinc finger.

This sequence belongs to the IAP family. Post-translationally, auto-ubiquitinated.

The catalysed reaction is S-ubiquitinyl-[E2 ubiquitin-conjugating enzyme]-L-cysteine + [acceptor protein]-L-lysine = [E2 ubiquitin-conjugating enzyme]-L-cysteine + N(6)-ubiquitinyl-[acceptor protein]-L-lysine.. RING-finger E3 ubiquitin ligase required to prevent cellular apoptosis in infected cells. Ubiquitinates and subsequently targets host pro-apoptotic cellular proteins such as HID for degradation by the proteasome. This chain is E3 ubiquitin-protein ligase IAP-3 (IAP3), found in Orgyia pseudotsugata multicapsid polyhedrosis virus (OpMNPV).